A 148-amino-acid polypeptide reads, in one-letter code: UPF0591 membrane protein C15E1.02c (148 aa).

3 helical membrane-spanning segments follow: residues 14-34, 80-102, and 122-142; these read AILL…GPLM, LLQL…VFGA, and ILVK…ALIG.

This sequence belongs to the UPF0591 family.

It localises to the membrane. The protein is UPF0591 membrane protein C15E1.02c of Schizosaccharomyces pombe (strain 972 / ATCC 24843) (Fission yeast).